The primary structure comprises 517 residues: MIPRLPRYFLKYFIIFTFFCVTFCFLKLCLGENGVEKKNHKTIEAYQYTHTFIHSAYYYPKSKSLGENAVVLVTTMNKRTMWKILDYKINMIGTNQSTHHTTRASLSTEHRIIERCDYMLIIAQTNSIDNMDKLEIEAEGVLVEIPYKKPIYIAPKPVIFCVSPQFAAEQWQTFLVQLHVSKRYGAHLQLYIVSMVESYFNLISEYEKMGLVSIEPWLTIKFSSTDGPYLEPNRNVELRNQAGAHTDCLLKYKESASFIGSLDMDDILIPNNANSYYEEFEREYAGSQFISALHYDKYDYKTIKVSELRSQSLSAIVKNAERLSTKDTGKSFVRPERFNSTWSHWSRAAQKKPIYLDGYEKPILRELKTISNNGMFHLKNMYLTEFNDLGIGQIPLNPTDNVTQLIEREHLAEIDADMKRMLSMPSISKLADSLPKEEFYMPIIFKCYNESFYHLRDTNQMRPDILCVNAYSCDLPQQVGNRCVHSDATYHSGPPMWPISFHFATNSFFSRDIGCYQ.

The helical transmembrane segment at 9–31 (FLKYFIIFTFFCVTFCFLKLCLG) threads the bilayer. The 299-residue stretch at 156 to 454 (KPVIFCVSPQ…FKCYNESFYH (299 aa)) folds into the GT92 domain.

Belongs to the glycosyltransferase 92 family.

Its subcellular location is the membrane. This chain is Glycosyltransferase family 92 protein F55C10.4, found in Caenorhabditis elegans.